A 341-amino-acid polypeptide reads, in one-letter code: HTH-type transcriptional repressor PurR (341 aa).

Residues 2-56 enclose the HTH lacI-type domain; sequence ATIKDVAKRANVSTTTVSHVINKTRFVAEETRNAVWAAIKELHYSPSAVARSLKV. A DNA-binding region (H-T-H motif) is located at residues 4-23; it reads IKDVAKRANVSTTTVSHVIN. The DNA-binding element occupies 48-56; the sequence is SAVARSLKV. Hypoxanthine is bound by residues Y73, R190, T192, F221, and D275.

Homodimer.

Its pathway is purine metabolism; purine nucleotide biosynthesis [regulation]. In terms of biological role, is the main repressor of the genes involved in the de novo synthesis of purine nucleotides, regulating purB, purC, purEK, purF, purHD, purL, purMN and guaBA expression. PurR is allosterically activated to bind its cognate DNA by binding the purine corepressors, hypoxanthine or guanine, thereby effecting transcription repression. The polypeptide is HTH-type transcriptional repressor PurR (Escherichia coli (strain UTI89 / UPEC)).